The chain runs to 236 residues: Small ribosomal subunit protein uS2c (236 aa).

Belongs to the universal ribosomal protein uS2 family.

Its subcellular location is the plastid. The protein localises to the chloroplast. The polypeptide is Small ribosomal subunit protein uS2c (rps2) (Zea mays (Maize)).